A 444-amino-acid chain; its full sequence is Putative F-box protein At1g64540 (444 aa).

In terms of domain architecture, F-box spans 4-50; that stretch reads REFISNLPDEILGKILSLLPTKLGVSTSVLSKRWRNLILLVDNFDLE.

The sequence is that of Putative F-box protein At1g64540 from Arabidopsis thaliana (Mouse-ear cress).